Consider the following 402-residue polypeptide: MANPKVVLAYSGGLDTSVAIKWLQEQGYDVVACCLDVGEGKDLEFVKEKALKVGAVKSYMIDAKEEFANEYALIALQAHALYEGKYPLISALSRPLISKKLVEIAELEGAVAVAHGCTGKGNDQVRFEVSIQALNPNLKVIAPVREWKWSREEEIEYAKQHDIPIPIDLDSPFSIDQNLWGRSNECGILEDPWAAPPEEAYELTVALEHTPNEPDIIEIGFEQGIPKTINGKAYSLAELILQLNALAGKHGVGRIDHVENRLVGIKSREVYECPGAMTLIKAHKELEDLTLVKEVAHFKPIIEQKIAEVIYNGLWFSPLKDALVAFLKETQKNVTGVVRVKLFKGHAIVEGRKSPFSLYDEKLATYTAEDEFDHQAAVGFISLFGLPTKVYSIVNGEKKVSV.

An ATP-binding site is contributed by 9–17 (AYSGGLDTS). Tyr-86 contacts L-citrulline. Position 116 (Gly-116) interacts with ATP. Thr-118, Asn-122, and Asp-123 together coordinate L-aspartate. Asn-122 is a binding site for L-citrulline. Residues Arg-126, Ser-174, Ser-183, Glu-259, and Tyr-271 each coordinate L-citrulline.

Belongs to the argininosuccinate synthase family. Type 1 subfamily. Homotetramer.

The protein resides in the cytoplasm. The enzyme catalyses L-citrulline + L-aspartate + ATP = 2-(N(omega)-L-arginino)succinate + AMP + diphosphate + H(+). It functions in the pathway amino-acid biosynthesis; L-arginine biosynthesis; L-arginine from L-ornithine and carbamoyl phosphate: step 2/3. The polypeptide is Argininosuccinate synthase (Anoxybacillus flavithermus (strain DSM 21510 / WK1)).